We begin with the raw amino-acid sequence, 1013 residues long: PHD finger protein 20-like protein 1 (1013 aa).

Residues 11–71 form the Tudor 1 domain; the sequence is ITFEIGARLE…SNRLRPLERP (61 aa). Glycyl lysine isopeptide (Lys-Gly) (interchain with G-Cter in SUMO2) cross-links involve residues Lys-75 and Lys-79. The region spanning 85–141 is the Tudor 2 domain; it reads FDFKAGEEVLARWTDCRYYPAKIEAINKEGTFTVQFYDGVIRCLKRMHIKAMPEDAK. 4 disordered regions span residues 183–206, 309–368, 389–454, and 482–511; these read AKNK…RDGG, EQAI…TPKS, VINK…QSSV, and VTGS…FANP. Polar residues predominate over residues 315–346; the sequence is KPQSQKKNEAVISSSANTQKPALLSSTLSSGK. Residue Ser-368 is modified to Phosphoserine. Over residues 404–415 the composition is skewed to basic residues; it reads PCKHSERRRRSQ. Ser-432 carries the post-translational modification Phosphoserine. Over residues 443–453 the composition is skewed to low complexity; it reads SISSQNQQQSS. Positions 496 to 505 are enriched in basic and acidic residues; sequence ECPREEKEET. A Glycyl lysine isopeptide (Lys-Gly) (interchain with G-Cter in SUMO2) cross-link involves residue Lys-530. The segment covering 533 to 565 has biased composition (basic and acidic residues); sequence KKVKLEEKTSTAFGKRKEKDKEKKEKRDKDHYK. Residues 533 to 585 are disordered; the sequence is KKVKLEEKTSTAFGKRKEKDKEKKEKRDKDHYKPKQKKKKKKKKKSKQHDYSD. The span at 566 to 579 shows a compositional bias: basic residues; it reads PKQKKKKKKKKKSK. The PHD-type zinc-finger motif lies at 681-729; sequence IVRCICELDEENGFMIQCEECLCWQHSVCMGLLEDSIPEQYICYICRDP. Residues 824–852 show a composition bias toward basic and acidic residues; it reads RKITPQDRANSEGKECVQNHKEPALRMEE. The disordered stretch occupies residues 824–911; that stretch reads RKITPQDRAN…LLYKNRGVSE (88 aa). Residues 854–878 show a composition bias toward polar residues; sequence YITSEHSYQKPQSFSQDCQSLTDPG. The segment covering 879–892 has biased composition (acidic residues); it reads SSDDDDASSFEEDG. Position 905 is an N6-acetyllysine (Lys-905).

Interacts with methylated DNMT1 (DNMT1K142me1). Interacts with SOX2.

The protein localises to the nucleus. Its function is as follows. Is a negative regulator of proteasomal degradation of a set of methylated proteins, including DNMT1 and SOX2. Involved in the maintainance of embryonic stem cells pluripotency, through the regulation of SOX2 levels. This Mus musculus (Mouse) protein is PHD finger protein 20-like protein 1 (Phf20l1).